Consider the following 262-residue polypeptide: MIDKTAFIHPTAIVEEGAVIGANAHIGPFCIVGPDVKIGEGTVLKSHVVVNGHTTIGRDNEIYQFASIGEVNQDLKYAGEPTRVEIGDRNRIRESVTIHRGTAQGGGLTKVGSDNLLMINAHVAHDCTVGNRCILANNATLAGHVSVDDFAIIGGMTAVHQFCIIGAHVMVGGCSGVAQDVPPYVIAQGNHATPFGVNIEGLKRRGFSKEALHAIRNAYKLLYRSGKTLDEVKPEIAEIAAKHPEVQPFYDFFARSTRGLIR.

It belongs to the transferase hexapeptide repeat family. LpxA subfamily. In terms of assembly, homotrimer.

It is found in the cytoplasm. The enzyme catalyses a (3R)-hydroxyacyl-[ACP] + UDP-N-acetyl-alpha-D-glucosamine = a UDP-3-O-[(3R)-3-hydroxyacyl]-N-acetyl-alpha-D-glucosamine + holo-[ACP]. The protein operates within glycolipid biosynthesis; lipid IV(A) biosynthesis; lipid IV(A) from (3R)-3-hydroxytetradecanoyl-[acyl-carrier-protein] and UDP-N-acetyl-alpha-D-glucosamine: step 1/6. Involved in the biosynthesis of lipid A, a phosphorylated glycolipid that anchors the lipopolysaccharide to the outer membrane of the cell. This chain is Acyl-[acyl-carrier-protein]--UDP-N-acetylglucosamine O-acyltransferase, found in Cronobacter sakazakii (strain ATCC BAA-894) (Enterobacter sakazakii).